The chain runs to 186 residues: Large ribosomal subunit protein uL22 (186 aa).

A disordered region spans residues 161-186; the sequence is VDDEPAKKKLSKKKLQRQKEKMLRSE. The span at 177-186 shows a compositional bias: basic and acidic residues; it reads RQKEKMLRSE.

The protein belongs to the universal ribosomal protein uL22 family.

This Drosophila pseudoobscura pseudoobscura (Fruit fly) protein is Large ribosomal subunit protein uL22 (RpL17).